The following is a 230-amino-acid chain: Somatolactin (230 aa).

The first 23 residues, 1–23, serve as a signal peptide directing secretion; sequence MKKTTVLQVCMVFVVCSLQAVIG. 3 cysteine pairs are disulfide-bonded: Cys28–Cys38, Cys87–Cys202, and Cys219–Cys227. Asn226 carries N-linked (GlcNAc...) asparagine glycosylation.

It belongs to the somatotropin/prolactin family.

Its subcellular location is the secreted. This is Somatolactin from Carassius auratus (Goldfish).